The sequence spans 422 residues: RNA exonuclease 4 (422 aa).

The disordered stretch occupies residues 1-194 (MGKAKVPASK…APAPPTEEDI (194 aa)). Serine 15 carries the phosphoserine modification. A compositionally biased stretch (basic residues) spans 26 to 40 (LTRKKNKKKKRFWKS). Residues serine 96 and serine 111 each carry the phosphoserine modification. Basic and acidic residues-rich tracts occupy residues 106–127 (NKKE…DQEA) and 151–176 (GTEH…DIEH). Lysine 115 is covalently cross-linked (Glycyl lysine isopeptide (Lys-Gly) (interchain with G-Cter in SUMO2)). The 152-residue stretch at 243–394 (ALALDCEMVG…QDAQAAMRLY (152 aa)) folds into the Exonuclease domain.

Belongs to the REXO4 family. As to quaternary structure, can bind ESR1 and ESR2. This interaction is abrogated by estrogen and augmented by tamoxifen treatment.

The protein localises to the nucleus. It localises to the nucleolus. In Homo sapiens (Human), this protein is RNA exonuclease 4 (REXO4).